The sequence spans 535 residues: CTP synthase (535 aa).

An amidoligase domain region spans residues 1 to 267; the sequence is MTKYIFVTGG…DKLVCEHMKL (267 aa). Ser13 lines the CTP pocket. Residue Ser13 participates in UTP binding. 14–19 provides a ligand contact to ATP; that stretch reads SLGKGI. An L-glutamine-binding site is contributed by Tyr54. Asp71 is an ATP binding site. The Mg(2+) site is built by Asp71 and Glu141. CTP is bound by residues 148–150, 188–193, and Lys224; these read DIE and KTKPTQ. UTP-binding positions include 188–193 and Lys224; that span reads KTKPTQ. One can recognise a Glutamine amidotransferase type-1 domain in the interval 292–534; sequence TIGLVGKYVE…IGASVEAANQ (243 aa). Gly354 is a binding site for L-glutamine. Cys381 acts as the Nucleophile; for glutamine hydrolysis in catalysis. L-glutamine-binding positions include 382–385, Glu405, and Arg462; that span reads LGMQ. Residues His507 and Glu509 contribute to the active site.

This sequence belongs to the CTP synthase family. As to quaternary structure, homotetramer. Interacts with BrxC.

The enzyme catalyses UTP + L-glutamine + ATP + H2O = CTP + L-glutamate + ADP + phosphate + 2 H(+). It catalyses the reaction L-glutamine + H2O = L-glutamate + NH4(+). The catalysed reaction is UTP + NH4(+) + ATP = CTP + ADP + phosphate + 2 H(+). Its pathway is pyrimidine metabolism; CTP biosynthesis via de novo pathway; CTP from UDP: step 2/2. Allosterically activated by GTP, when glutamine is the substrate; GTP has no effect on the reaction when ammonia is the substrate. The allosteric effector GTP functions by stabilizing the protein conformation that binds the tetrahedral intermediate(s) formed during glutamine hydrolysis. Inhibited by the product CTP, via allosteric rather than competitive inhibition. Its function is as follows. Catalyzes the ATP-dependent amination of UTP to CTP with either L-glutamine or ammonia as the source of nitrogen. Regulates intracellular CTP levels through interactions with the four ribonucleotide triphosphates. The protein is CTP synthase of Bacillus subtilis (strain 168).